The primary structure comprises 323 residues: Sodium/potassium-transporting ATPase subunit beta-2 (323 aa).

Residues 1–50 lie on the Cytoplasmic side of the membrane; that stretch reads MPTITEDCIDGFQQYYSRPPERPKKKSLKQMVYDSEDNSYFGRSMDSWAK. A helical; Signal-anchor for type II membrane protein transmembrane segment spans residues 51–71; sequence IGIFYVAFYGVLAALVAICMW. At 72–323 the chain is on the extracellular side; sequence AFFQTLDPRI…GSVHYELLID (252 aa). Intrachain disulfides connect Cys153–Cys165 and Cys175–Cys189. 2 N-linked (GlcNAc...) asparagine glycosylation sites follow: Asn180 and Asn206. Cys241 and Cys298 are disulfide-bonded.

Belongs to the X(+)/potassium ATPases subunit beta family. The sodium/potassium-transporting ATPase is composed of a catalytic alpha subunit, an auxiliary non-catalytic beta subunit and an additional regulatory subunit. In terms of tissue distribution, in embryos, it is expressed in the neurons of the CNS and PNS, in Garland cells and posterior spiracles. In adults, it shows a nervous system specific distribution: optic lobes, brain, thoracic ganglia and axonal pathways in the leg. Both isoforms concentrate in the adult head, isoform 2.2 being predominant. Both isoforms are weakly expressed in the thorax and very poorly expressed in the abdomen.

Its subcellular location is the cell membrane. Functionally, this is the non-catalytic component of the active enzyme, which catalyzes the hydrolysis of ATP coupled with the exchange of Na(+) and K(+) ions across the plasma membrane. The beta subunit regulates, through assembly of alpha/beta heterodimers, the number of sodium pumps transported to the plasma membrane. This is Sodium/potassium-transporting ATPase subunit beta-2 (nrv2) from Drosophila melanogaster (Fruit fly).